We begin with the raw amino-acid sequence, 336 residues long: UPF0324 membrane protein BR0028/BS1330_I0028 (336 aa).

Helical transmembrane passes span 9-26 (ILPG…AMVL), 36-55 (RAWL…VRSL), 68-90 (FSAK…ASAV), 94-116 (GSGL…YGIG), 128-150 (LVAC…VIGA), 160-182 (AFTA…LLGL), 189-211 (ILAG…VSLL), 221-240 (LVRV…ISGN), 247-269 (PGFF…LHSL), 279-301 (AIQY…GVDI), and 313-335 (LTAI…MLGV).

Belongs to the UPF0324 family.

Its subcellular location is the cell membrane. This is UPF0324 membrane protein BR0028/BS1330_I0028 from Brucella suis biovar 1 (strain 1330).